The primary structure comprises 138 residues: Small ribosomal subunit protein uS11c (138 aa).

It belongs to the universal ribosomal protein uS11 family. Part of the 30S ribosomal subunit.

The protein localises to the plastid. It localises to the chloroplast. The sequence is that of Small ribosomal subunit protein uS11c from Phaseolus vulgaris (Kidney bean).